Reading from the N-terminus, the 278-residue chain is Hydroxyethylthiazole kinase (278 aa).

Met-48 lines the substrate pocket. 2 residues coordinate ATP: Arg-124 and Thr-175. Substrate is bound at residue Gly-202.

It belongs to the Thz kinase family. Mg(2+) is required as a cofactor.

It catalyses the reaction 5-(2-hydroxyethyl)-4-methylthiazole + ATP = 4-methyl-5-(2-phosphooxyethyl)-thiazole + ADP + H(+). It participates in cofactor biosynthesis; thiamine diphosphate biosynthesis; 4-methyl-5-(2-phosphoethyl)-thiazole from 5-(2-hydroxyethyl)-4-methylthiazole: step 1/1. Functionally, catalyzes the phosphorylation of the hydroxyl group of 4-methyl-5-beta-hydroxyethylthiazole (THZ). The chain is Hydroxyethylthiazole kinase from Clostridium botulinum (strain Eklund 17B / Type B).